The primary structure comprises 165 residues: Glycine cleavage system H protein, mitochondrial (165 aa).

The transit peptide at Met-1 to Phe-31 directs the protein to the mitochondrion. One can recognise a Lipoyl-binding domain in the interval Val-55–Lys-137. The residue at position 96 (Lys-96) is an N6-lipoyllysine.

It belongs to the GcvH family. As to quaternary structure, the glycine cleavage system is composed of four components that only loosely associate: the P protein (EC 1.4.4.2), the T protein (EC 2.1.2.10), the L protein (EC 1.8.1.4) and the lipoyl-bearing H protein. It depends on (R)-lipoate as a cofactor. Expressed in roots, stems and leaves.

The protein localises to the mitochondrion. The glycine cleavage system catalyzes the degradation of glycine. The H protein shuttles the methylamine group of glycine from the P protein to the T protein. This Flaveria trinervia (Clustered yellowtops) protein is Glycine cleavage system H protein, mitochondrial (GDCSH).